The primary structure comprises 782 residues: MFSPSKFRKQVNESESVSNCESTTSNSRRILDQHAGLPISSAFRTEASDIGHHFSTKMYFKILSPNNVFALMGDNEFKTSFKIFTIFEPTSTPNGKIQSLITISYKINNVLFKMEKEIFIEKVNIFSLELHIFNFQSTNRSNPASESIHQLDLSSEALVTSTLNIRGNKITTTLRPRTSPYKRAGDASMSREDLRSPDSVSTFTTVLHVFHKVFQVAATYTIRENRSERQTKVKLESLERRLKANEKARKEIEAEAEKWKDRATRNSKRLPELELELAETVQAKEEWQVKSQEMEIQNKQLVEELNEVQKKLEEIENSQKTFHQKVVSTLNLDEEYFQNPDEEQDGSLSQFNMDVLEQEIVKYQEKCISLKQENEILKEKLQQLSSSLTVNQNHVSTLMDHLEINKEQSREIQGICKKEIAIRQDHENRINHDVTLLNSLINEQKMELEMLKAEIRCLRSYSQEMSQSNKNNIILLKSAETERKSLLETLTVLLNSEEEATENNVKRTIRDLVRERDTEQTKRFEAEKAASNAEGVLLEQAKQQRNALFRARVSEEEYSKSMEKIEELEQELLASDLERKNLEHKIASLENCISKVSQLLNVNVGGVFDAIFDRIEELIAQESVYRVVVNENRLISENIFRGLQSVRKDFQSGKSGGGSDKKQPASPVAAAAKIIQERHTLKTIDKMDKLNKDLLATMTIETLKAADIEKTNLKKRMNEQDARIRQLEREKKEGERIRSIIAKWEKRNIPKTEKSSPMKKVPPIENFRAKSQTSITGLSPVL.

2 disordered regions span residues 1 to 25 (MFSP…STTS) and 175 to 195 (RPRT…EDLR). Low complexity predominate over residues 13 to 25 (ESESVSNCESTTS). Over residues 183 to 195 (RAGDASMSREDLR) the composition is skewed to basic and acidic residues. 4 coiled-coil regions span residues 223-331 (RENR…STLN), 348-398 (LSQF…VSTL), 428-601 (NRIN…QLLN), and 699-743 (TIET…IIAK). The tract at residues 748–782 (NIPKTEKSSPMKKVPPIENFRAKSQTSITGLSPVL) is disordered. Polar residues predominate over residues 769 to 782 (AKSQTSITGLSPVL).

This is an uncharacterized protein from Caenorhabditis elegans.